Here is a 270-residue protein sequence, read N- to C-terminus: BPI fold-containing family A member 1 (270 aa).

A signal peptide spans 1–19; it reads MFLVGSLVVLCGLLAQSTA. The segment at 104 to 109 is important for surfactant activity and antibacterial properties; the sequence is LVGGLL. A glycan (N-linked (GlcNAc...) asparagine) is linked at Asn174. Cys196 and Cys238 are oxidised to a cystine.

It belongs to the BPI/LBP/Plunc superfamily. Plunc family. Monomer. Interacts (via N-terminus) with SCNN1B, a subunit of the heterotrimeric epithelial sodium channel (ENaC); this inhibits proteolytic activation of ENaC. As to expression, detected in adult nasal epithelium, heart, lung, spleen, testis and salivary gland, and in embryonic nasal epithelium, lung, salivary gland and thymus.

The protein localises to the secreted. Lipid-binding protein which shows high specificity for the surfactant phospholipid dipalmitoylphosphatidylcholine (DPPC). Plays a role in the innate immune responses of the upper airways. Reduces the surface tension in secretions from airway epithelia and inhibits the formation of biofilm by pathogenic Gram-negative bacteria, such as P.aeruginosa and K.pneumoniae. Negatively regulates proteolytic cleavage of SCNN1G, an event that is required for activation of the epithelial sodium channel (ENaC), and thereby contributes to airway surface liquid homeostasis and proper clearance of mucus. Plays a role in the airway inflammatory response after exposure to irritants. May attract macrophages and neutrophils. The sequence is that of BPI fold-containing family A member 1 (Bpifa1) from Rattus norvegicus (Rat).